Here is a 196-residue protein sequence, read N- to C-terminus: DnaA initiator-associating protein DiaA (196 aa).

Residues 34–196 enclose the SIS domain; sequence LVQSLLNGNK…DNTLFPHQDD (163 aa).

It belongs to the SIS family. DiaA subfamily. As to quaternary structure, homotetramer; dimer of dimers.

In terms of biological role, required for the timely initiation of chromosomal replication via direct interactions with the DnaA initiator protein. The polypeptide is DnaA initiator-associating protein DiaA (Enterobacter sp. (strain 638)).